A 396-amino-acid chain; its full sequence is Enoyl-[acyl-carrier-protein] reductase [NADH] (396 aa).

NAD(+) contacts are provided by residues 47–52 (GASTGF), 73–74 (FE), 110–111 (DA), and 138–139 (LA). Tyrosine 224 is a substrate binding site. Residue tyrosine 234 is the Proton donor of the active site. NAD(+)-binding positions include lysine 243 and 272–274 (LVT).

This sequence belongs to the TER reductase family. In terms of assembly, monomer.

It carries out the reaction a 2,3-saturated acyl-[ACP] + NAD(+) = a (2E)-enoyl-[ACP] + NADH + H(+). It participates in lipid metabolism; fatty acid biosynthesis. In terms of biological role, involved in the final reduction of the elongation cycle of fatty acid synthesis (FAS II). Catalyzes the reduction of a carbon-carbon double bond in an enoyl moiety that is covalently linked to an acyl carrier protein (ACP). The polypeptide is Enoyl-[acyl-carrier-protein] reductase [NADH] (Flavobacterium psychrophilum (strain ATCC 49511 / DSM 21280 / CIP 103535 / JIP02/86)).